We begin with the raw amino-acid sequence, 498 residues long: Lysine--tRNA ligase (498 aa).

Mg(2+) contacts are provided by Glu407 and Glu414.

Belongs to the class-II aminoacyl-tRNA synthetase family. As to quaternary structure, homodimer. Mg(2+) is required as a cofactor.

It localises to the cytoplasm. The enzyme catalyses tRNA(Lys) + L-lysine + ATP = L-lysyl-tRNA(Lys) + AMP + diphosphate. This is Lysine--tRNA ligase from Sinorhizobium medicae (strain WSM419) (Ensifer medicae).